The following is a 183-amino-acid chain: Dual specificity protein phosphatase 22-B (183 aa).

The region spanning 4-144 (GINKVLPDLY…LQEFQTGELQ (141 aa)) is the Tyrosine-protein phosphatase domain. Cysteine 88 functions as the Phosphocysteine intermediate in the catalytic mechanism.

The protein belongs to the protein-tyrosine phosphatase family. Non-receptor class dual specificity subfamily.

It is found in the cytoplasm. The protein resides in the nucleus. It carries out the reaction O-phospho-L-tyrosyl-[protein] + H2O = L-tyrosyl-[protein] + phosphate. It catalyses the reaction O-phospho-L-seryl-[protein] + H2O = L-seryl-[protein] + phosphate. The catalysed reaction is O-phospho-L-threonyl-[protein] + H2O = L-threonyl-[protein] + phosphate. Functionally, activates the Jnk signaling pathway. Dephosphorylates and deactivates p38 and stress-activated protein kinase/c-Jun N-terminal kinase (SAPK/JNK). This Danio rerio (Zebrafish) protein is Dual specificity protein phosphatase 22-B (dusp22b).